Here is a 432-residue protein sequence, read N- to C-terminus: Alkaline protease secretion protein AprE (432 aa).

Residues 1–14 are Cytoplasmic-facing; it reads MTRTVKRDENAYAR. Residues 15–36 form a helical membrane-spanning segment; it reads LGWLLVLFGFGGALLWAAFAPL. Residues 37–432 are Periplasmic-facing; the sequence is DQGVAVPATV…DRAHVALAEN (396 aa).

The protein belongs to the membrane fusion protein (MFP) (TC 8.A.1) family.

The protein resides in the cell inner membrane. Its function is as follows. Involved in the secretion of alkaline protease. The sequence is that of Alkaline protease secretion protein AprE (aprE) from Pseudomonas aeruginosa (strain ATCC 15692 / DSM 22644 / CIP 104116 / JCM 14847 / LMG 12228 / 1C / PRS 101 / PAO1).